The primary structure comprises 1229 residues: Nuclear envelope pore membrane protein POM 121C (1229 aa).

Residues 1–10 (MSPAAAAAGA) show a composition bias toward low complexity. Residues 1–24 (MSPAAAAAGAGERRRPIASVRDGR) form a disordered region. Positions 1–40 (MSPAAAAAGAGERRRPIASVRDGRGRGCGGPAGAALLGLS) are cisternal side. The tract at residues 1–398 (MSPAAAAAGA…AITSSYSSTR (398 aa)) is required for targeting to the nucleus and nuclear pore complex. The span at 11 to 24 (GERRRPIASVRDGR) shows a compositional bias: basic and acidic residues. The helical transmembrane segment at 41-61 (LVGLLLYLVPAAAALAWLAVG) threads the bilayer. The interval 62 to 1229 (TTAAWWGLSR…QARRQHTRKK (1168 aa)) is pore side. Serine 81 is subject to Phosphoserine. Disordered regions lie at residues 90-200 (RTLF…LPDR), 296-507 (KKKK…LGYS), 579-747 (KKMQ…TAPT), 936-966 (PLPS…ALTP), and 1202-1229 (PSFS…TRKK). Residues 155 to 166 (ARPAPRSTPPSQ) show a composition bias toward pro residues. Residues 176 to 189 (PSLPTPLLRPSGRP) are compositionally biased toward low complexity. 5 positions are modified to phosphoserine: serine 322, serine 328, serine 348, serine 370, and serine 373. Positions 374–400 (LTGAYTSGIPSSSRNAITSSYSSTRGI) are enriched in polar residues. Low complexity predominate over residues 409 to 422 (PSSSPFSSPASSRS). Basic and acidic residues-rich tracts occupy residues 427–439 (RPAK…ELCH) and 449–463 (ADKE…DTTP). The segment covering 468–479 (NSNSQSTPGSSG) has biased composition (polar residues). Residues 612–629 (PPLGLSQSGPPGLLPSPS) show a composition bias toward low complexity. The span at 660 to 673 (QAETATKPQATSAP) shows a compositional bias: polar residues. Composition is skewed to low complexity over residues 689–703 (SPSS…SASP) and 726–747 (SVSA…TAPT). Residues 1219–1229 (LQARRQHTRKK) show a composition bias toward basic residues.

The protein belongs to the POM121 family.

The protein localises to the nucleus. Its subcellular location is the nuclear pore complex. The protein resides in the nucleus membrane. It localises to the endoplasmic reticulum membrane. Its function is as follows. Essential component of the nuclear pore complex (NPC). The repeat-containing domain may be involved in anchoring components of the pore complex to the pore membrane. When overexpressed in cells induces the formation of cytoplasmic annulate lamellae (AL). This is Nuclear envelope pore membrane protein POM 121C (POM121C) from Homo sapiens (Human).